The sequence spans 446 residues: tRNA modification GTPase MnmE (446 aa).

(6S)-5-formyl-5,6,7,8-tetrahydrofolate-binding residues include Arg24, Glu81, and Lys120. The 153-residue stretch at 216–368 (GLHAVLIGPP…LHIRLRELAL (153 aa)) folds into the TrmE-type G domain. K(+) is bound at residue Asn226. GTP-binding positions include 226 to 231 (NAGKSS), 245 to 251 (TDVAGTT), and 270 to 273 (DTAG). Ser230 lines the Mg(2+) pocket. K(+) contacts are provided by Thr245, Val247, and Thr250. Thr251 serves as a coordination point for Mg(2+). A (6S)-5-formyl-5,6,7,8-tetrahydrofolate-binding site is contributed by Lys446.

This sequence belongs to the TRAFAC class TrmE-Era-EngA-EngB-Septin-like GTPase superfamily. TrmE GTPase family. In terms of assembly, homodimer. Heterotetramer of two MnmE and two MnmG subunits. It depends on K(+) as a cofactor.

The protein resides in the cytoplasm. In terms of biological role, exhibits a very high intrinsic GTPase hydrolysis rate. Involved in the addition of a carboxymethylaminomethyl (cmnm) group at the wobble position (U34) of certain tRNAs, forming tRNA-cmnm(5)s(2)U34. The sequence is that of tRNA modification GTPase MnmE from Xanthomonas oryzae pv. oryzae (strain KACC10331 / KXO85).